We begin with the raw amino-acid sequence, 236 residues long: Lectin alpha chain (236 aa).

Residues Glu-8 and Asp-10 each coordinate Mn(2+). Residues Asp-10, Tyr-12, Asn-14, and Asp-19 each contribute to the Ca(2+) site. Residue Tyr-12 coordinates a carbohydrate. 3 residues coordinate Mn(2+): Asp-19, His-24, and Ser-34. Position 99-100 (99-100 (LY)) interacts with a carbohydrate. Asp-207 serves as a coordination point for Ca(2+). Position 227 (Arg-227) interacts with a carbohydrate.

Belongs to the leguminous lectin family. In terms of assembly, equilibrium between homodimer and homotetramer. Oligomerization is pH-dependent with homotetramers forming at pH 6.5 and above. The beta and gamma chains are produced by partial proteolytic processing of the lectin alpha chain by an asparaginyl endopeptidase. Mixture of 60% alpha lectin and 40% of its beta and gamma proteolytic fragments. Seed.

D-mannose/D-glucose-binding lectin. Has anti-inflammatory activity in rats. Induces histamine release in mast cells from rat. Induces lymphocyte proliferation and IFNG production. This Cratylia argentea (Cratylia floribunda) protein is Lectin alpha chain.